A 358-amino-acid chain; its full sequence is DNA polymerase IV (358 aa).

A UmuC domain is found at 4–185; the sequence is IIHVDMDCFY…LPLIKIPGVG (182 aa). Residues aspartate 8 and aspartate 103 each coordinate Mg(2+). Residue glutamate 104 is part of the active site.

The protein belongs to the DNA polymerase type-Y family. Monomer. It depends on Mg(2+) as a cofactor.

The protein resides in the cytoplasm. It carries out the reaction DNA(n) + a 2'-deoxyribonucleoside 5'-triphosphate = DNA(n+1) + diphosphate. Poorly processive, error-prone DNA polymerase involved in untargeted mutagenesis. Copies undamaged DNA at stalled replication forks, which arise in vivo from mismatched or misaligned primer ends. These misaligned primers can be extended by PolIV. Exhibits no 3'-5' exonuclease (proofreading) activity. May be involved in translesional synthesis, in conjunction with the beta clamp from PolIII. This Shewanella halifaxensis (strain HAW-EB4) protein is DNA polymerase IV.